Here is a 405-residue protein sequence, read N- to C-terminus: Serine/threonine-protein kinase SSN3 (405 aa).

The 311-residue stretch at Y40–F350 folds into the Protein kinase domain. ATP contacts are provided by residues I46 to V54 and K71. Catalysis depends on D173, which acts as the Proton acceptor. Residues D377–K405 are disordered. The segment covering K381–G391 has biased composition (polar residues).

It belongs to the protein kinase superfamily. CMGC Ser/Thr protein kinase family. CDC2/CDKX subfamily. In terms of assembly, component of the srb8-11 complex, a regulatory module of the Mediator complex. Mg(2+) serves as cofactor.

It localises to the nucleus. The catalysed reaction is L-seryl-[protein] + ATP = O-phospho-L-seryl-[protein] + ADP + H(+). It carries out the reaction L-threonyl-[protein] + ATP = O-phospho-L-threonyl-[protein] + ADP + H(+). It catalyses the reaction [DNA-directed RNA polymerase] + ATP = phospho-[DNA-directed RNA polymerase] + ADP + H(+). Functionally, component of the srb8-11 complex. The srb8-11 complex is a regulatory module of the Mediator complex which is itself dependent transcription. The srb8-11 complex may be involved in the transcriptional repression of a subset of genes regulated by Mediator. It may inhibit the association of the Mediator complex with RNA polymerase II to form the holoenzyme complex. The srb8-11 complex phosphorylates the C-terminal domain (CTD) of the largest subunit of RNA polymerase II. This chain is Serine/threonine-protein kinase SSN3 (SSN3), found in Yarrowia lipolytica (strain CLIB 122 / E 150) (Yeast).